We begin with the raw amino-acid sequence, 410 residues long: MASNGSFSAQRNANAGTTMKRRNDNRGYGGGIGCYQEERNRYAPPQKRFRSQLQQQFRSGHNPLYHYGSNTNNNVSRVSSQSYNNYGVDVIASNSSFALPNNDSNTNNYQKPFVVYGNPNPQIVPLPLPYRKLDPLDSLPQWVPNSTPNYPVRSSNFVPNTPDFTNVQNPMNHSNMVSVVSQSMHQPIVLSKELTDLLSLLNNEKEKKTSEASNNDSLPVGLSFDNPSSLNVRHESVIKSLYSDMPRQCTSCGVRFKCQEEHSKHMDWHVRKNRSVKTTTRLGQQPKKSRGWLASASLWLCAPTGGGTVEVASFGGGEMQKKNEKDQVQKQHMVPADEDQKNCALCVEPFEEFFSHEADDWMYKDAVYLTKNGRIVHVKCMPEPRPAKDLREPSRVMSVTVPSVAKAILC.

Over residues 1–17 the composition is skewed to polar residues; sequence MASNGSFSAQRNANAGT. The interval 1–32 is disordered; it reads MASNGSFSAQRNANAGTTMKRRNDNRGYGGGI. A coiled-coil region spans residues 191 to 214; sequence SKELTDLLSLLNNEKEKKTSEASN. The segment at 247–269 adopts a C2H2-type zinc-finger fold; that stretch reads RQCTSCGVRFKCQEEHSKHMDWH.

As to quaternary structure, forms a complex with cleavage and polyadenylation specificity factor (CPSF) subunits CSTF77, CLPS3, PCFS4 and PCFS1.

The protein resides in the nucleus. The chain is Polyadenylation and cleavage factor homolog 5 from Arabidopsis thaliana (Mouse-ear cress).